The primary structure comprises 230 residues: DNA repair protein rdl1 (230 aa).

As to quaternary structure, interacts with rlp1 and sws1.

It localises to the cytoplasm. The protein localises to the nucleus. Its function is as follows. Involved in homologous recombination where it functions at an early stage of recombination in a pre-recombinogenic complex with rlp1 and sws1. Also has a role at a later stage of recombination in association with the rhp55-rhp57 complex. In Schizosaccharomyces pombe (strain 972 / ATCC 24843) (Fission yeast), this protein is DNA repair protein rdl1 (rdl1).